Here is a 289-residue protein sequence, read N- to C-terminus: Segregation and condensation protein A (289 aa).

The segment covering 1-18 (MSEDRRSPTDEAPREGEL) has biased composition (basic and acidic residues). The tract at residues 1 to 24 (MSEDRRSPTDEAPREGELPRSPGD) is disordered.

Belongs to the ScpA family. As to quaternary structure, component of the Structural Maintenance of Chromosome (SMC) condensin-like complex composed of ScpA, ScpB and the Smc homodimer. ScpA and ScpB bind to the head domain of Smc. The presence of the three proteins is required for the association of the complex with DNA.

The protein resides in the cytoplasm. Functionally, a conditionally essential component of the chromosome segregation machinery. Participates in chromosomal partition during cell division. Important for positioning of ParB-parS complexes (ori of replication) and of the ter replication site, as well as for segration of the ParB-parS complex and thus chromosome segregation. May act via the formation of a condensin-like complex containing Smc, ScpA and ScpB that pulls DNA away from mid-cell into both cell halves. The polypeptide is Segregation and condensation protein A (Myxococcus xanthus (strain DK1622)).